The sequence spans 195 residues: Imidazoleglycerol-phosphate dehydratase (195 aa).

The protein belongs to the imidazoleglycerol-phosphate dehydratase family.

The protein resides in the cytoplasm. The catalysed reaction is D-erythro-1-(imidazol-4-yl)glycerol 3-phosphate = 3-(imidazol-4-yl)-2-oxopropyl phosphate + H2O. It participates in amino-acid biosynthesis; L-histidine biosynthesis; L-histidine from 5-phospho-alpha-D-ribose 1-diphosphate: step 6/9. The chain is Imidazoleglycerol-phosphate dehydratase from Geobacter metallireducens (strain ATCC 53774 / DSM 7210 / GS-15).